A 720-amino-acid polypeptide reads, in one-letter code: Polyribonucleotide nucleotidyltransferase (720 aa).

Residues aspartate 486 and aspartate 492 each coordinate Mg(2+). In terms of domain architecture, KH spans 553–612 (PRITVINVPKEKIREVIGTGGKVIREIVEFSGAKIDIEDDGTIKIASTSEESTQKAIDRI). The 69-residue stretch at 622 to 690 (GKIYNGKVVK…DRGKVKLSMR (69 aa)) folds into the S1 motif domain. A disordered region spans residues 698-720 (EDISDKVGPKGGRGGRGEGDLAE).

This sequence belongs to the polyribonucleotide nucleotidyltransferase family. Mg(2+) serves as cofactor.

The protein resides in the cytoplasm. The enzyme catalyses RNA(n+1) + phosphate = RNA(n) + a ribonucleoside 5'-diphosphate. In terms of biological role, involved in mRNA degradation. Catalyzes the phosphorolysis of single-stranded polyribonucleotides processively in the 3'- to 5'-direction. The protein is Polyribonucleotide nucleotidyltransferase of Granulibacter bethesdensis (strain ATCC BAA-1260 / CGDNIH1).